A 283-amino-acid polypeptide reads, in one-letter code: 4-diphosphocytidyl-2-C-methyl-D-erythritol kinase (283 aa).

K11 is an active-site residue. 94 to 104 is a binding site for ATP; it reads PVAAGLAGGSA. D136 is an active-site residue.

It belongs to the GHMP kinase family. IspE subfamily.

The catalysed reaction is 4-CDP-2-C-methyl-D-erythritol + ATP = 4-CDP-2-C-methyl-D-erythritol 2-phosphate + ADP + H(+). It functions in the pathway isoprenoid biosynthesis; isopentenyl diphosphate biosynthesis via DXP pathway; isopentenyl diphosphate from 1-deoxy-D-xylulose 5-phosphate: step 3/6. Catalyzes the phosphorylation of the position 2 hydroxy group of 4-diphosphocytidyl-2C-methyl-D-erythritol. The protein is 4-diphosphocytidyl-2-C-methyl-D-erythritol kinase of Acetivibrio thermocellus (strain ATCC 27405 / DSM 1237 / JCM 9322 / NBRC 103400 / NCIMB 10682 / NRRL B-4536 / VPI 7372) (Clostridium thermocellum).